Reading from the N-terminus, the 85-residue chain is UPF0386 protein TM1040_0419 (85 aa).

Residues 62 to 85 (SKSSRPYQISEKGRRSVRAQLDNR) form a disordered region.

The protein belongs to the UPF0386 family.

The polypeptide is UPF0386 protein TM1040_0419 (Ruegeria sp. (strain TM1040) (Silicibacter sp.)).